A 309-amino-acid chain; its full sequence is Taste receptor type 2 member 105 (309 aa).

At methionine 1–leucine 9 the chain is on the extracellular side. A helical transmembrane segment spans residues leucine 10–cysteine 32. At methionine 33 to isoleucine 44 the chain is on the cytoplasmic side. Residues glycine 45 to tyrosine 67 form a helical membrane-spanning segment. At alanine 68–serine 86 the chain is on the extracellular side. The helical transmembrane segment at cysteine 87 to leucine 109 threads the bilayer. Over lysine 110–valine 129 the chain is Cytoplasmic. A helical membrane pass occupies residues phenylalanine 130–valine 149. Over lysine 150 to tyrosine 177 the chain is Extracellular. Asparagine 161 is a glycosylation site (N-linked (GlcNAc...) asparagine). Residues valine 178 to isoleucine 200 form a helical membrane-spanning segment. The Cytoplasmic segment spans residues serine 201–lysine 226. The chain crosses the membrane as a helical span at residues alanine 227 to isoleucine 249. At isoleucine 250–lysine 258 the chain is on the extracellular side. Residues leucine 259–leucine 281 traverse the membrane as a helical segment. At threonine 282–threonine 309 the chain is on the cytoplasmic side.

It belongs to the G-protein coupled receptor T2R family. As to expression, expressed in subsets of taste receptor cells of the tongue and palate epithelium and exclusively in gustducin-positive cells. Expressed in 15% taste bud cells in circumvallate and foliate papillae but only in 2% in fungiform papillae. Expressed in the duodenum, antrum and fundus (part of the stomach).

It localises to the membrane. Its function is as follows. Gustducin-coupled cycloheximide receptor implicated in the perception of bitter compounds in the oral cavity and the gastrointestinal tract. Signals through PLCB2 and the calcium-regulated cation channel TRPM5. The chain is Taste receptor type 2 member 105 (Tas2r105) from Rattus norvegicus (Rat).